A 320-amino-acid polypeptide reads, in one-letter code: Glutathione synthetase (320 aa).

In terms of domain architecture, ATP-grasp spans 133-317; the sequence is KMYTLQFAAV…LGEKVICWLE (185 aa). 159–215 provides a ligand contact to ATP; sequence LEEHGAAVLKPLGGKAGEGILFLDPGDRNFNSLVEISTQHGKEPVMVQRFLPEAKEG. Positions 288 and 290 each coordinate Mg(2+).

It belongs to the prokaryotic GSH synthase family. The cofactor is Mg(2+). Mn(2+) serves as cofactor.

It carries out the reaction gamma-L-glutamyl-L-cysteine + glycine + ATP = glutathione + ADP + phosphate + H(+). The protein operates within sulfur metabolism; glutathione biosynthesis; glutathione from L-cysteine and L-glutamate: step 2/2. The protein is Glutathione synthetase of Synechocystis sp. (strain ATCC 27184 / PCC 6803 / Kazusa).